The chain runs to 341 residues: Ribosomal RNA small subunit methyltransferase H (341 aa).

Residues 47-49 (GGY), D64, F91, D109, and Q116 each bind S-adenosyl-L-methionine.

Belongs to the methyltransferase superfamily. RsmH family.

Its subcellular location is the cytoplasm. The enzyme catalyses cytidine(1402) in 16S rRNA + S-adenosyl-L-methionine = N(4)-methylcytidine(1402) in 16S rRNA + S-adenosyl-L-homocysteine + H(+). Its function is as follows. Specifically methylates the N4 position of cytidine in position 1402 (C1402) of 16S rRNA. In Sinorhizobium medicae (strain WSM419) (Ensifer medicae), this protein is Ribosomal RNA small subunit methyltransferase H.